The chain runs to 1268 residues: Vigilin (1268 aa).

Residue Ser2 is modified to N-acetylserine. Thr8 carries the phosphothreonine modification. Phosphoserine occurs at positions 11, 31, and 35. 14 KH domains span residues 158–229, 230–302, 303–371, 372–442, 443–514, 515–588, 589–660, 661–734, 735–807, 808–880, 881–979, 980–1059, 1060–1134, and 1135–1209; these read PKEH…RLEV, EKAF…AVEV, KKSQ…SVAA, PSWL…EINI, DHKF…DLII, EQRF…SVPI, FKQF…EVSI, PAKL…DIRA, KPEY…SMLV, DPKH…ECAI, PQKF…EVEV, PFDL…SVTV, DPKY…DVPL, and DHRV…ALQV. Phosphothreonine is present on residues Thr295 and Thr296. Phosphoserine is present on Ser317. A Phosphotyrosine modification is found at Tyr437. Position 645 is a phosphoserine (Ser645). The segment at 914-944 is disordered; that stretch reads ENAVHSTEPVVQENGDEAGEGREAKDCDPGS. Positions 932–944 are enriched in basic and acidic residues; it reads GEGREAKDCDPGS. Lys991 carries the post-translational modification N6-acetyllysine. The segment at 1233–1268 is disordered; the sequence is WTASSSEKAPDMSSSEEFPSFGAQVAPKTLPWGPKR. Polar residues predominate over residues 1234–1249; it reads TASSSEKAPDMSSSEE. A phosphoserine mark is found at Ser1247 and Ser1252.

It is found in the cytoplasm. The protein resides in the nucleus. Functionally, appears to play a role in cell sterol metabolism. It may function to protect cells from over-accumulation of cholesterol. The chain is Vigilin (HDLBP) from Homo sapiens (Human).